We begin with the raw amino-acid sequence, 380 residues long: Probable protein phosphatase 2C 27 (380 aa).

Residues 84–344 (RSGSCAEQGA…DNLTVIVVCF (261 aa)) enclose the PPM-type phosphatase domain. Asp-128, Gly-129, Asp-292, and Asp-335 together coordinate Mn(2+).

This sequence belongs to the PP2C family. It depends on Mg(2+) as a cofactor. Mn(2+) serves as cofactor. Expressed in roots, leaves, stems, flower, and trichomes.

Its subcellular location is the nucleus. It is found in the cytoplasm. The enzyme catalyses O-phospho-L-seryl-[protein] + H2O = L-seryl-[protein] + phosphate. It carries out the reaction O-phospho-L-threonyl-[protein] + H2O = L-threonyl-[protein] + phosphate. Functionally, confers salt tolerance by triggering the expression of stress-responsive genes. The polypeptide is Probable protein phosphatase 2C 27 (Arabidopsis thaliana (Mouse-ear cress)).